Consider the following 1481-residue polypeptide: MQRSPLEKASVVSKLFFSWTRPILKKGYRQRLELSDIYQIPSADSADNLSEKLEREWDRELASKKNPKLINALRRCFFWRFTFYGILLYLGEVTKAVQPLLLGRIIASYDPDNKTERSIAIYLGIGLCLLFIVRTLLLHPAIFGLHHIGMQMRIAMFSLIYKKTLKLSSRVLDKISIGQLVSLLSNNLNKFDEGLALAHFVWIAPLQVALLMGLIWELLQASAFCGLGFLIVLALFQAGLGRMMMKYRDQRAGKINERLVITSEMIENIQSVKAYCWEEAMEKMIENLRQTELKLTRKAAYVRYFNSSAFFFSGFFVVFLSVLPYALIKGIILRKIFTTISFCIVLRMAVTRQFPWAVQTWYDSLGAINKIQDFLQKQEYKTLEYNLTTTEVVMENVTAFWEEGFGELFEKAKQNNNNRKTSNDDNNLFFSNFSLLGTPVLKDINFKIERGQLLAVAGSTGAGKTSLLMMIMGELEPSEGKIKHSGRISFCSQFSWIMPGTIKENIIFGVSYDEYRYRSVIKACQLEEDISKFAEKDNIVLGEGGITLSGGQRARISLARAVYKDADLYLLDSPFGYLDVLTEKEIFESCVCKLMANKTRILVTSKMEHLKKADKILILHEGSSYFYGTFSELQNLRPDFSSKLMGYDSFDQFSSERRNSILTETLRRFSLEGDAPVSWTETKKQSFKQTGEFGEKRKNSILNSINSIRKFSIVQKTPLQMNGIEEDSDEPLERRLSLVPDSEQGEAILPRISVINTGPALQVRRRQSVLNMMTHSVNQGQSIHRKTTASTRKVSLAPQANLTELDIYSRRLSQETGLEISEEINEEDLKECFFDDMESIPAVTTWNTYLRYITLHKSLIFVLIWCLVIFLAEVAASLVVLWLLRNTPFQDKGNSTYSRNNSYAVIITNTSSYYVFYIYVGVADTLLALGFFRGLPLVHTLITVSKILHHKMLHSVLQAPMSTLNTLKAGGILNRFSKDIAILDDLLPLTIFDFIQLLLIVIGAIAVVSVLQPYIFLATVPVIAAFVLLRAYFLQTSQQLKQLESAGRSPIFTHLVTSLKGLWTLRAFGRQPYFETLFHKALNLHTANWFLYLSTLRWFQMRIEMIFVIFFIAVTFISILTTGEGEGTVGIILTLAMNIMSTLQWAVNSSIDVDSLMRSVSRVFKFIDMPTEEGKPTKSTKAYKNGQLSKVMIIENSHVKKDDIWPSGGQMTIKDLTAKYIEGGNAILENISFSISPGQRVGLLGRTGSGKSTLLSAFLRLLNTEGEIQIDGVSWDSITLQQWRKAFGVIPQKVFIFTGTFRKNLDPYEQWSDQEIWKVADEVGLRTVIEQFPGKLDFVLVDGGCVLSHGHKQLMCLARSVLSKAKILLLDEPSAHLDPVTYQIIRRALKQAFADCTVILCEHRIEAMLECQQFLVIEENKVRQYDSIQKLLNEKSLFRQAISHSDRVKLFPHRNSSKYKSRPQIASLKEETEEEVQETRL.

Residues 1–77 lie on the Cytoplasmic side of the membrane; the sequence is MQRSPLEKAS…KLINALRRCF (77 aa). The helical transmembrane segment at 78–98 threads the bilayer; the sequence is FWRFTFYGILLYLGEVTKAVQ. An ABC transmembrane type-1 1 domain is found at 81–365; sequence FTFYGILLYL…WAVQTWYDSL (285 aa). Topologically, residues 99 to 122 are extracellular; it reads PLLLGRIIASYDPDNKTERSIAIY. A helical transmembrane segment spans residues 123–146; the sequence is LGIGLCLLFIVRTLLLHPAIFGLH. The Cytoplasmic portion of the chain corresponds to 147-195; it reads HIGMQMRIAMFSLIYKKTLKLSSRVLDKISIGQLVSLLSNNLNKFDEGL. Residues 196 to 216 traverse the membrane as a helical segment; that stretch reads ALAHFVWIAPLQVALLMGLIW. The Extracellular segment spans residues 217–222; sequence ELLQAS. Residues 223–243 form a helical membrane-spanning segment; it reads AFCGLGFLIVLALFQAGLGRM. The Cytoplasmic segment spans residues 244–298; that stretch reads MMKYRDQRAGKINERLVITSEMIENIQSVKAYCWEEAMEKMIENLRQTELKLTRK. A helical membrane pass occupies residues 299 to 319; sequence AAYVRYFNSSAFFFSGFFVVF. The Extracellular segment spans residues 320–339; sequence LSVLPYALIKGIILRKIFTT. The helical transmembrane segment at 340-358 threads the bilayer; that stretch reads ISFCIVLRMAVTRQFPWAV. Residues 359–858 are Cytoplasmic-facing; it reads QTWYDSLGAI…YLRYITLHKS (500 aa). Residues tryptophan 401, serine 434, 458–465, and glutamine 493 each bind ATP; that span reads GSTGAGKT. An ABC transporter 1 domain is found at 423–646; the sequence is NDDNNLFFSN…RPDFSSKLMG (224 aa). The S-palmitoyl cysteine moiety is linked to residue cysteine 524. Serine 549 and serine 660 each carry phosphoserine. The segment at 654 to 831 is disordered R region; the sequence is SSERRNSILT…EEINEEDLKE (178 aa). A Phosphoserine; by PKA modification is found at serine 670. The residue at position 686 (serine 686) is a Phosphoserine. Lysine 688 is covalently cross-linked (Glycyl lysine isopeptide (Lys-Gly) (interchain with G-Cter in ubiquitin)). Serine 700 and serine 712 each carry phosphoserine. A Phosphothreonine modification is found at threonine 717. A phosphoserine mark is found at serine 737, serine 753, serine 768, serine 790, serine 795, and serine 813. The chain crosses the membrane as a helical span at residues 859–879; that stretch reads LIFVLIWCLVIFLAEVAASLV. In terms of domain architecture, ABC transmembrane type-1 2 spans 859-1155; that stretch reads LIFVLIWCLV…AVNSSIDVDS (297 aa). At 880-918 the chain is on the extracellular side; sequence VLWLLRNTPFQDKGNSTYSRNNSYAVIITNTSSYYVFYI. 3 N-linked (GlcNAc...) asparagine glycosylation sites follow: asparagine 894, asparagine 900, and asparagine 909. A discontinuously helical transmembrane segment spans residues 919 to 939; it reads YVGVADTLLALGFFRGLPLVH. The Cytoplasmic segment spans residues 940 to 990; sequence TLITVSKILHHKMLHSVLQAPMSTLNTLKAGGILNRFSKDIAILDDLLPLT. The chain crosses the membrane as a helical span at residues 991–1011; the sequence is IFDFIQLLLIVIGAIAVVSVL. Residues 1012–1013 are Extracellular-facing; the sequence is QP. The chain crosses the membrane as a helical span at residues 1014–1034; that stretch reads YIFLATVPVIAAFVLLRAYFL. The Cytoplasmic portion of the chain corresponds to 1035-1095; it reads QTSQQLKQLE…TANWFLYLST (61 aa). The chain crosses the membrane as a helical span at residues 1096 to 1116; sequence LRWFQMRIEMIFVIFFIAVTF. The Extracellular segment spans residues 1117-1130; the sequence is ISILTTGEGEGTVG. The chain crosses the membrane as a helical span at residues 1131-1151; it reads IILTLAMNIMSTLQWAVNSSI. The Cytoplasmic segment spans residues 1152–1481; the sequence is DVDSLMRSVS…TEEEVQETRL (330 aa). One can recognise an ABC transporter 2 domain in the interval 1211-1444; that stretch reads MTIKDLTAKY…KSLFRQAISH (234 aa). ATP is bound by residues tyrosine 1220 and 1245-1252; that span reads GRTGSGKS. An interaction with GORASP2 region spans residues 1387 to 1481; the sequence is RALKQAFADC…TEEEVQETRL (95 aa). Residue cysteine 1396 is the site of S-palmitoyl cysteine attachment. Serine 1445 and serine 1457 each carry phosphoserine. The tract at residues 1453–1481 is disordered; the sequence is HRNSSKYKSRPQIASLKEETEEEVQETRL. Residues 1471-1481 are compositionally biased toward acidic residues; the sequence is ETEEEVQETRL. The short motif at 1479-1481 is the PDZ-binding element; sequence TRL.

It belongs to the ABC transporter superfamily. ABCC family. CFTR transporter (TC 3.A.1.202) subfamily. As to quaternary structure, monomer; does not require oligomerization for channel activity. May form oligomers in the membrane. Interacts with SLC26A3, SLC26A6 and NHERF1. Interacts with SHANK2. Interacts with MYO6. Interacts (via C-terminus) with GOPC (via PDZ domain); this promotes CFTR internalization and thereby decreases channel activity. Interacts with SLC4A7 through NHERF1. Found in a complex with MYO5B and RAB11A. Interacts with ANO1. Interacts with SLC26A8. Interacts with AHCYL1; the interaction increases CFTR activity. Interacts with CSE1L. The core-glycosylated form interacts with GORASP2 (via PDZ GRASP-type 1 domain) in respone to ER stress. Interacts with MARCHF2; the interaction leads to CFTR ubiqtuitination and degradation. Interacts with ADGRG2. Post-translationally, N-glycosylated. Phosphorylated; cAMP treatment promotes phosphorylation and activates the channel. Dephosphorylation decreases the ATPase activity (in vitro). Phosphorylation at PKA sites activates the channel. Phosphorylation at PKC sites enhances the response to phosphorylation by PKA. Phosphorylated by AMPK; this inhibits channel activity. In terms of processing, ubiquitinated, leading to its degradation in the lysosome. Deubiquitination by USP10 in early endosomes enhances its endocytic recycling to the cell membrane. Ubiquitinated by RNF185 during ER stress. Ubiquitinated by MARCHF2.

The protein resides in the apical cell membrane. It localises to the early endosome membrane. Its subcellular location is the cell membrane. It is found in the recycling endosome membrane. The protein localises to the endoplasmic reticulum membrane. The protein resides in the nucleus. It catalyses the reaction ATP + H2O + closed Cl(-) channel = ADP + phosphate + open Cl(-) channel.. It carries out the reaction chloride(in) = chloride(out). The catalysed reaction is hydrogencarbonate(in) = hydrogencarbonate(out). The enzyme catalyses ATP + H2O = ADP + phosphate + H(+). In terms of biological role, epithelial ion channel that plays an important role in the regulation of epithelial ion and water transport and fluid homeostasis. Mediates the transport of chloride ions across the cell membrane. Possesses an intrinsic ATPase activity and utilizes ATP to gate its channel; the passive flow of anions through the channel is gated by cycles of ATP binding and hydrolysis by the ATP-binding domains. The ion channel is also permeable to HCO(3)(-); selectivity depends on the extracellular chloride concentration. Exerts its function also by modulating the activity of other ion channels and transporters. Contributes to the regulation of the pH and the ion content of the epithelial fluid layer. Modulates the activity of the epithelial sodium channel (ENaC) complex, in part by regulating the cell surface expression of the ENaC complex. May regulate bicarbonate secretion and salvage in epithelial cells by regulating the transporter SLC4A7. Can inhibit the chloride channel activity of ANO1. Plays a role in the chloride and bicarbonate homeostasis during sperm epididymal maturation and capacitation. This chain is Cystic fibrosis transmembrane conductance regulator, found in Callithrix jacchus (White-tufted-ear marmoset).